Consider the following 620-residue polypeptide: uncharacterized protein (620 aa).

Low complexity-rich tracts occupy residues 278 to 290 (RPPS…AGEP) and 301 to 319 (ASTA…TRPT). Residues 278-620 (RPPSGSGEAA…KSQPPAAHTA (343 aa)) form a disordered region. Residues 336–411 (ARPESEEQTD…QESQVARRDE (76 aa)) show a composition bias toward basic and acidic residues. Composition is skewed to pro residues over residues 446-470 (VPGP…PPMT) and 481-500 (RCPP…PPRP). Low complexity-rich tracts occupy residues 501–512 (SSDTPLSAVSRP) and 522–541 (TARV…YSPA). Residues 542–551 (PLSPPSPVSP) are compositionally biased toward pro residues. Residues 597–607 (SVPSSASPSAS) are compositionally biased toward low complexity.

This sequence belongs to the herpesviridae US22 family.

This is an uncharacterized protein from Homo sapiens (Human).